The sequence spans 200 residues: Inner membrane-spanning protein YciB (200 aa).

Transmembrane regions (helical) follow at residues 7–27, 32–52, 56–76, 93–113, 126–146, and 153–173; these read HPLF…VVNA, FAAT…SYVV, VPLM…LTLV, LFAA…AIMF, ILTF…EIIW, and FWVG…AIAQ.

The protein belongs to the YciB family.

It localises to the cell inner membrane. In terms of biological role, plays a role in cell envelope biogenesis, maintenance of cell envelope integrity and membrane homeostasis. In Bradyrhizobium sp. (strain BTAi1 / ATCC BAA-1182), this protein is Inner membrane-spanning protein YciB.